The chain runs to 205 residues: Small ribosomal subunit protein uS4 (205 aa).

Residues 18–45 (NIWGRPKSPVNRREYGPGQHGQRRKGKL) form a disordered region. The S4 RNA-binding domain occupies 94–157 (RRLDTVVYRA…KQLAFVLEAS (64 aa)).

It belongs to the universal ribosomal protein uS4 family. Part of the 30S ribosomal subunit. Contacts protein S5. The interaction surface between S4 and S5 is involved in control of translational fidelity.

In terms of biological role, one of the primary rRNA binding proteins, it binds directly to 16S rRNA where it nucleates assembly of the body of the 30S subunit. Functionally, with S5 and S12 plays an important role in translational accuracy. The chain is Small ribosomal subunit protein uS4 from Rhodopseudomonas palustris (strain BisA53).